The following is a 42-amino-acid chain: Photosystem I reaction center subunit IX (42 aa).

A helical transmembrane segment spans residues 7–27 (YLSVAPVLSTLWFGSLAGLLI).

It belongs to the PsaJ family.

It localises to the plastid. The protein localises to the chloroplast thylakoid membrane. In terms of biological role, may help in the organization of the PsaE and PsaF subunits. The polypeptide is Photosystem I reaction center subunit IX (Lepidium virginicum (Virginia pepperweed)).